We begin with the raw amino-acid sequence, 310 residues long: ADP-L-glycero-D-manno-heptose-6-epimerase (310 aa).

NADP(+)-binding positions include 10-11 (FI), 31-32 (DN), Lys38, Lys53, 75-79 (EGACS), and Asn92. The Proton acceptor role is filled by Tyr140. NADP(+) is bound at residue Lys144. Asn169 provides a ligand contact to substrate. NADP(+) is bound by residues Val170 and Lys178. Lys178 functions as the Proton acceptor in the catalytic mechanism. Substrate contacts are provided by residues Ser180, His187, 201–204 (FEGS), Arg209, and Tyr272.

Belongs to the NAD(P)-dependent epimerase/dehydratase family. HldD subfamily. As to quaternary structure, homopentamer. NADP(+) is required as a cofactor.

It carries out the reaction ADP-D-glycero-beta-D-manno-heptose = ADP-L-glycero-beta-D-manno-heptose. The protein operates within nucleotide-sugar biosynthesis; ADP-L-glycero-beta-D-manno-heptose biosynthesis; ADP-L-glycero-beta-D-manno-heptose from D-glycero-beta-D-manno-heptose 7-phosphate: step 4/4. In terms of biological role, catalyzes the interconversion between ADP-D-glycero-beta-D-manno-heptose and ADP-L-glycero-beta-D-manno-heptose via an epimerization at carbon 6 of the heptose. This is ADP-L-glycero-D-manno-heptose-6-epimerase from Salmonella newport (strain SL254).